The following is a 590-amino-acid chain: MNVYRTHLCNELREEHIDQTVTLSGWVYRKRDHGKIIFVDLRDHYGITQLVFNDSDTTIFQLITTLRLESVITIKGIVKARDSSTINETLDTGSIEVIVSSINIETASEILPINIASMQDYSEDIRLTYRFLDLRRDKVKNNIILRSKVITEIRKSMENMGFIEIQTPILTSSSPEGARDYLVPSRIHHGKFYALPQAPQLFKQLLMVSGFDKYFQIAPCFRDEDARADRSPGEFYQLDIEMSFVTQEDIFNIIEPVMINIFSKFSNKTINKEFPKISYHDAMLYYGSDKPDLRNPLVIQDVTEIFRDSEFKIFNSNIKQGMVVRAIPAPNTAHNPRSFFDSKIEFAKTLGAQGLGYITFIDDSLAKGPIAKFLDKDRLDNIKLICNIKAGDSVFFVSEIADKAALFAGEVRTLLGKELNLIEENTFKFCWVIDFPYFKYDHKEKSINFFHNPFSMPQGGLEALENQDPLNILAYQYDIVCNGIEISSGAIRNHKLNIMYKAFSIAGYTKEMVDEKFKALTRAFKFGAPPHGGIAPGIDRIVMLLADVPNIREVICFPLNQSGEDLLMGSPSEIDNDHLKLLSLNIIKKT.

E176 is a binding site for L-aspartate. The tract at residues 200 to 203 is aspartate; it reads QLFK. L-aspartate contacts are provided by R222 and H451. 222-224 is a binding site for ATP; it reads RDE. Residue E485 participates in ATP binding. L-aspartate is bound at residue R492. 537–540 provides a ligand contact to ATP; it reads GIDR.

This sequence belongs to the class-II aminoacyl-tRNA synthetase family. Type 1 subfamily. As to quaternary structure, homodimer.

The protein localises to the cytoplasm. The catalysed reaction is tRNA(Asx) + L-aspartate + ATP = L-aspartyl-tRNA(Asx) + AMP + diphosphate. Aspartyl-tRNA synthetase with relaxed tRNA specificity since it is able to aspartylate not only its cognate tRNA(Asp) but also tRNA(Asn). Reaction proceeds in two steps: L-aspartate is first activated by ATP to form Asp-AMP and then transferred to the acceptor end of tRNA(Asp/Asn). The sequence is that of Aspartate--tRNA(Asp/Asn) ligase from Ehrlichia ruminantium (strain Welgevonden).